The sequence spans 76 residues: Bowman-Birk type proteinase inhibitor DE-4 (76 aa).

7 disulfides stabilise this stretch: cysteine 15–cysteine 69, cysteine 16–cysteine 31, cysteine 19–cysteine 65, cysteine 21–cysteine 29, cysteine 39–cysteine 46, cysteine 43–cysteine 58, and cysteine 48–cysteine 56.

The protein belongs to the Bowman-Birk serine protease inhibitor family.

This is Bowman-Birk type proteinase inhibitor DE-4 from Macrotyloma axillare (Perennial horse gram).